A 243-amino-acid polypeptide reads, in one-letter code: UPF0246 protein gbs2036 (243 aa).

It belongs to the UPF0246 family.

The protein is UPF0246 protein gbs2036 of Streptococcus agalactiae serotype III (strain NEM316).